We begin with the raw amino-acid sequence, 98 residues long: Dehydrogenase acuH (98 aa).

It participates in secondary metabolite biosynthesis. Its function is as follows. Dehydrogenase; part of the gene cluster that mediates the biosynthesis of aculins. The pathway begins with the synthesis of 6-methylsalicylic acid by the polyketide synthase (PKS) acuA via condensation of acetate and malonate units. The 6-methylsalicylic acid decarboxylase acuB then catalyzes the decarboxylation of 6-methylsalicylic acid to yield m-cresol (also known as 3-methylphenol). These first reactions occur in the cytosol. The intermediate m-cresol is then transported into the endoplasmic reticulum where the cytochrome P450 monooxygenase acuC converts it to m-hydroxybenzyl alcohol, which is further converted to gentisyl alcohol by the cytochrome P450 monooxygenase acuD. Gentisyl alcohol is further oxidized by the oxidoreductase acuE that probably catalyzes hydroxylation of the aromatic ring. The aromatic system might then be opened by oxidation through a Baeyer-Villiger type of oxidation, which could be catalyzed by acuF, with the carboxylic acid at C-1 subsequently reduced to an aldehyde by acuG. Subsequently, a hemiacetal is formed, before the dehydrogenase acuH would reduce the double bond between C-4 and C-6. Finally, keto-enol tautomerism results in formation of aculinic acid, which exists as two diastereomers (both R/S configurations at C-1) by non-enzymatic hemiacetal formation. The carboxypeptidase acuI could be involved in the linking of aculinic acid to an aculene A moiety produced by the aculene biosynthesis cluster and which leads to the production of aculin A. AcuI may also be involved in the attachment of proline to aculinic acid to form epi-aculins A and B. This is Dehydrogenase acuH from Aspergillus aculeatus (strain ATCC 16872 / CBS 172.66 / WB 5094).